The sequence spans 327 residues: Ferrochelatase (327 aa).

Positions 187 and 265 each coordinate Fe cation.

The protein belongs to the ferrochelatase family.

It is found in the cytoplasm. The catalysed reaction is heme b + 2 H(+) = protoporphyrin IX + Fe(2+). The protein operates within porphyrin-containing compound metabolism; protoheme biosynthesis; protoheme from protoporphyrin-IX: step 1/1. Its function is as follows. Catalyzes the ferrous insertion into protoporphyrin IX. The polypeptide is Ferrochelatase (Chlamydia pneumoniae (Chlamydophila pneumoniae)).